A 404-amino-acid polypeptide reads, in one-letter code: p-hydroxybenzoate hydroxylase (404 aa).

Residues E35, 45-50 (RIRAGI), and Q105 each bind FAD. Residues Y203, 214–216 (SMR), and Y224 each bind substrate. D288 lines the FAD pocket. P295 contacts substrate. 301 to 302 (LN) contacts FAD.

It belongs to the aromatic-ring hydroxylase family. In terms of assembly, homodimer. The cofactor is FAD.

The enzyme catalyses 4-hydroxybenzoate + NADPH + O2 + H(+) = 3,4-dihydroxybenzoate + NADP(+) + H2O. The protein operates within aromatic compound metabolism; benzoate degradation via hydroxylation; 3,4-dihydroxybenzoate from benzoate: step 2/2. Functionally, catalyzes the incorporation of an atom of dioxygen into p-hydroxybenzoate (p-OHB) to form 3,4-dihydroxybenzoate (3,4DOHB). The reaction occurs in two parts: reduction of the flavin adenine dinucleotide (FAD) in the enzyme by reduced nicotinamide adenine dinucleotide phosphate (NADPH) in response to binding p-hydroxybenzoate to the enzyme and oxidation of reduced FAD with oxygen to form a hydroperoxide, which then oxygenates p-hydroxybenzoate. This Acinetobacter baylyi (strain ATCC 33305 / BD413 / ADP1) protein is p-hydroxybenzoate hydroxylase (pobA).